The sequence spans 380 residues: tRNA-specific 2-thiouridylase MnmA (380 aa).

Residues 10 to 17 (AMSGGVDS) and leucine 36 each bind ATP. Cysteine 106 acts as the Nucleophile in catalysis. Cysteine 106 and cysteine 202 are oxidised to a cystine. Glycine 130 serves as a coordination point for ATP. The tract at residues 152 to 154 (KNQ) is interaction with tRNA. The Cysteine persulfide intermediate role is filled by cysteine 202. The interaction with tRNA stretch occupies residues 308–309 (RY).

The protein belongs to the MnmA/TRMU family.

The protein localises to the cytoplasm. It carries out the reaction S-sulfanyl-L-cysteinyl-[protein] + uridine(34) in tRNA + AH2 + ATP = 2-thiouridine(34) in tRNA + L-cysteinyl-[protein] + A + AMP + diphosphate + H(+). Catalyzes the 2-thiolation of uridine at the wobble position (U34) of tRNA, leading to the formation of s(2)U34. This is tRNA-specific 2-thiouridylase MnmA from Leptospira biflexa serovar Patoc (strain Patoc 1 / Ames).